An 805-amino-acid polypeptide reads, in one-letter code: Angiotensin-converting enzyme 2 (805 aa).

Positions 1-17 are cleaved as a signal peptide; sequence MSSSCWLLLSLVAVATA. The Extracellular segment spans residues 18–740; that stretch reads QSLIEEKAES…LKPPYEPPVT (723 aa). In terms of domain architecture, Peptidase M2 spans 19–607; sequence SLIEEKAESF…QNRNSTVGWS (589 aa). N-linked (GlcNAc...) asparagine glycans are attached at residues Asn53, Asn82, and Asn90. Cysteines 133 and 141 form a disulfide. Chloride is bound at residue Arg169. Arg273 contributes to the substrate binding site. Asn299 carries an N-linked (GlcNAc...) asparagine glycan. A disulfide bond links Cys344 and Cys361. Substrate is bound at residue 345 to 346; it reads HP. His374 is a Zn(2+) binding site. Glu375 (proton acceptor) is an active-site residue. Zn(2+) is bound by residues His378 and Glu402. Residue Asn432 is glycosylated (N-linked (GlcNAc...) asparagine). 2 residues coordinate chloride: Trp477 and Lys481. His505 functions as the Proton donor in the catalytic mechanism. Tyr515 serves as a coordination point for substrate. Cys530 and Cys542 are joined by a disulfide. Residues Asn546 and Asn601 are each glycosylated (N-linked (GlcNAc...) asparagine). The Collectrin-like domain occupies 614-805; that stretch reads ADQSIKVRIS…QNSDDAQTSF (192 aa). An essential for cleavage by ADAM17 region spans residues 652-659; the sequence is REYFSREK. Residues Asn660 and Asn690 are each glycosylated (N-linked (GlcNAc...) asparagine). The segment at 697–716 is essential for cleavage by TMPRSS11D and TMPRSS2; it reads RSEVEEAIRMSRGRINDIFG. A helical membrane pass occupies residues 741–761; the sequence is IWLIIFGVVMGTVVVGIVILI. Over 762-805 the chain is Cytoplasmic; that stretch reads VTGIKGRKKKNETKREENPYDSMDIGKGESNAGFQNSDDAQTSF. Positions 771–805 are disordered; that stretch reads KNETKREENPYDSMDIGKGESNAGFQNSDDAQTSF. The short motif at 778-786 is the LIR element; sequence ENPYDSMDI. At Tyr781 the chain carries Phosphotyrosine. Residues 781-784 carry the Endocytic sorting signal motif; that stretch reads YDSM. The short motif at 781–785 is the SH2-binding element; that stretch reads YDSMD. Ser783 carries the post-translational modification Phosphoserine. Residue Lys788 forms a Glycyl lysine isopeptide (Lys-Gly) (interchain with G-Cter in ubiquitin) linkage. The PTB motif lies at 792 to 795; it reads NAGF. Polar residues predominate over residues 793 to 805; the sequence is AGFQNSDDAQTSF. The PDZ-binding motif lies at 803–805; sequence TSF.

The protein belongs to the peptidase M2 family. In terms of assembly, homodimer. Interacts with the catalytically active form of TMPRSS2. Interacts with SLC6A19; this interaction is essential for expression and function of SLC6A19 in intestine. Interacts with ITGA5:ITGB1. Probably interacts (via endocytic sorting signal motif) with AP2M1; the interaction is inhibited by phosphorylation of Tyr-781. Interacts (via PDZ-binding motif) with NHERF1 (via PDZ domains); the interaction may enhance ACE2 membrane residence. Requires Zn(2+) as cofactor. It depends on chloride as a cofactor. Glycosylated. Post-translationally, proteolytic cleavage by ADAM17 generates a secreted form. Also cleaved by serine proteases: TMPRSS2, TMPRSS11D and HPN/TMPRSS1. In terms of processing, phosphorylated. Phosphorylation at Tyr-781 probably inhibits interaction with AP2M1 and enables interactions with proteins containing SH2 domains. Ubiquitinated. Ubiquitinated on Lys-788 via 'Lys-48'-linked ubiquitin. 'Lys-48'-linked deubiquitinated by USP50 on the Lys-788; leading to its stabilization. In terms of tissue distribution, expressed in heart, kidney and forebrain. In testis, expression is restricted to Leydig cells. In heart, expressed in endothelial cells from small and large arteries, arterial smooth muscle cells, and myocytes (at protein level). Ubiquitously expressed, with highest levels in ileum, bladder and lung.

It is found in the secreted. The protein resides in the cell membrane. Its subcellular location is the cytoplasm. It localises to the cell projection. The protein localises to the cilium. It is found in the apical cell membrane. The enzyme catalyses angiotensin II + H2O = angiotensin-(1-7) + L-phenylalanine. It carries out the reaction angiotensin I + H2O = angiotensin-(1-9) + L-leucine. The catalysed reaction is bradykinin(1-8) + H2O = bradykinin(1-7) + L-phenylalanine. It catalyses the reaction neurotensin + H2O = neurotensin-(1-12) + L-leucine. The enzyme catalyses kinetensin + H2O = kinetensin-(1-8) + L-leucine. It carries out the reaction dynorphin A-(1-13) + H2O = dynorphin A-(1-12) + L-lysine. The catalysed reaction is apelin-13 + H2O = apelin-12 + L-phenylalanine. It catalyses the reaction [Pyr1]apelin-13 + H2O = [Pyr1]apelin-12 + L-phenylalanine. The enzyme catalyses apelin-17 + H2O = apelin-16 + L-phenylalanine. With respect to regulation, activated by chloride and fluoride, but not bromide. Inhibited by MLN-4760, cFP_Leu, and EDTA, but not by the ACE inhibitors linosipril, captopril, enalaprilat. In terms of biological role, essential counter-regulatory carboxypeptidase of the renin-angiotensin hormone system that is a critical regulator of blood volume, systemic vascular resistance, and thus cardiovascular homeostasis. Converts angiotensin I to angiotensin 1-9, a nine-amino acid peptide with anti-hypertrophic effects in cardiomyocytes, and angiotensin II to angiotensin 1-7, which then acts as a beneficial vasodilator and anti-proliferation agent, counterbalancing the actions of the vasoconstrictor angiotensin II. Also removes the C-terminal residue from three other vasoactive peptides, neurotensin, kinetensin, and des-Arg bradykinin, but is not active on bradykinin. Also cleaves other biological peptides, such as apelins, casomorphins and dynorphin A. Plays an important role in amino acid transport by acting as binding partner of amino acid transporter SLC6A19 in intestine, regulating trafficking, expression on the cell surface, and its catalytic activity. This Rattus norvegicus (Rat) protein is Angiotensin-converting enzyme 2 (Ace2).